The primary structure comprises 311 residues: R2-like ligand binding oxidase (311 aa).

Mn(2+)-binding residues include Glu-68, Glu-101, and His-104. The segment at residues 71 to 162 (VTQDIQPFMA…AAQVRASVTY (92 aa)) is a cross-link (3-(O4'-tyrosyl)-valine (Val-Tyr)). Glu-101 is a binding site for Fe cation. Residues Glu-167, Glu-202, and His-205 each coordinate Fe cation.

Belongs to the ribonucleoside diphosphate reductase small chain family. R2-like ligand binding oxidase subfamily. In terms of assembly, homodimer. Fe cation is required as a cofactor. It depends on Mn(2+) as a cofactor.

Probable oxidase that might be involved in lipid metabolism. In Mycolicibacterium paratuberculosis (strain ATCC BAA-968 / K-10) (Mycobacterium paratuberculosis), this protein is R2-like ligand binding oxidase.